The primary structure comprises 407 residues: FMN-dependent alpha-hydroxy acid dehydrogenase PB1A11.03 (407 aa).

The FMN hydroxy acid dehydrogenase domain maps to 28–406; it reads QRPQITVDGR…DLNRDVLYKE (379 aa). Tyrosine 54 provides a ligand contact to a 2-oxocarboxylate. FMN-binding residues include serine 136 and glutamine 158. An a 2-oxocarboxylate-binding site is contributed by tyrosine 160. Threonine 188 contributes to the FMN binding site. An a 2-oxocarboxylate-binding site is contributed by arginine 197. Lysine 277 is an FMN binding site. Catalysis depends on histidine 301, which acts as the Proton acceptor. Residue arginine 304 coordinates a 2-oxocarboxylate. Residues 332–336 and 355–356 contribute to the FMN site; these read DSGVR and GR.

The protein belongs to the FMN-dependent alpha-hydroxy acid dehydrogenase family. It depends on FMN as a cofactor.

It localises to the cytoplasm. It is found in the nucleus. This chain is FMN-dependent alpha-hydroxy acid dehydrogenase PB1A11.03, found in Schizosaccharomyces pombe (strain 972 / ATCC 24843) (Fission yeast).